The sequence spans 167 residues: MSEVEFSHEYWMRHAMTLAKRAWDEREVPVGAVLVHNNRVIGEGWNRPIGRHDPTAHAEIMALRQGGLVMQNYRLIDATLYVTLEPCVMCAGAMIHSRIGRVVFGARDAKTGAAGSLMDVLHHPGMNHRVEITEGILADECAALLSDFFRMRRQEIKAQKKAQSSTD.

A CMP/dCMP-type deaminase domain is found at 6-117 (FSHEYWMRHA…DAKTGAAGSL (112 aa)). A Zn(2+)-binding site is contributed by histidine 57. Catalysis depends on glutamate 59, which acts as the Proton donor. Zn(2+)-binding residues include cysteine 87 and cysteine 90.

The protein belongs to the cytidine and deoxycytidylate deaminase family. In terms of assembly, homodimer. Requires Zn(2+) as cofactor.

The enzyme catalyses adenosine(34) in tRNA + H2O + H(+) = inosine(34) in tRNA + NH4(+). Functionally, catalyzes the deamination of adenosine to inosine at the wobble position 34 of tRNA(Arg2). The chain is tRNA-specific adenosine deaminase from Escherichia coli O157:H7.